The following is a 293-amino-acid chain: Immediate early response gene 5-like protein (293 aa).

The protein belongs to the IER family.

The protein is Immediate early response gene 5-like protein (ier5l) of Xenopus laevis (African clawed frog).